Consider the following 365-residue polypeptide: Eukaryotic translation initiation factor 3 subunit H (365 aa).

Positions 11–160 constitute an MPN domain; sequence VKVEALVVMK…LRAFRLSPKF (150 aa).

This sequence belongs to the eIF-3 subunit H family. In terms of assembly, component of the eukaryotic translation initiation factor 3 (eIF-3) complex.

Its subcellular location is the cytoplasm. Component of the eukaryotic translation initiation factor 3 (eIF-3) complex, which is involved in protein synthesis of a specialized repertoire of mRNAs and, together with other initiation factors, stimulates binding of mRNA and methionyl-tRNAi to the 40S ribosome. The eIF-3 complex specifically targets and initiates translation of a subset of mRNAs involved in cell proliferation. This is Eukaryotic translation initiation factor 3 subunit H from Aspergillus niger (strain ATCC MYA-4892 / CBS 513.88 / FGSC A1513).